We begin with the raw amino-acid sequence, 89 residues long: UPF0223 protein BPUM_1362 (89 aa).

The protein belongs to the UPF0223 family.

The protein is UPF0223 protein BPUM_1362 of Bacillus pumilus (strain SAFR-032).